Here is a 516-residue protein sequence, read N- to C-terminus: GMP synthase [glutamine-hydrolyzing] (516 aa).

The Glutamine amidotransferase type-1 domain maps to Lys8–Leu198. The active-site Nucleophile is Cys84. Catalysis depends on residues His172 and Glu174. The region spanning Trp199 to Arg391 is the GMPS ATP-PPase domain. Ser226–Ser232 contributes to the ATP binding site.

In terms of assembly, homodimer.

The enzyme catalyses XMP + L-glutamine + ATP + H2O = GMP + L-glutamate + AMP + diphosphate + 2 H(+). Its pathway is purine metabolism; GMP biosynthesis; GMP from XMP (L-Gln route): step 1/1. Functionally, catalyzes the synthesis of GMP from XMP. The polypeptide is GMP synthase [glutamine-hydrolyzing] (Francisella tularensis subsp. mediasiatica (strain FSC147)).